The sequence spans 158 residues: Ribonuclease H (158 aa).

Positions 3–144 (ELKLIHIFTD…CDQLARAAAE (142 aa)) constitute an RNase H type-1 domain. Mg(2+)-binding residues include aspartate 12, glutamate 50, aspartate 72, and aspartate 136. The interval 137-158 (QLARAAAEASPTQVDEGYQPES) is disordered.

It belongs to the RNase H family. As to quaternary structure, monomer. Requires Mg(2+) as cofactor.

Its subcellular location is the cytoplasm. The enzyme catalyses Endonucleolytic cleavage to 5'-phosphomonoester.. Endonuclease that specifically degrades the RNA of RNA-DNA hybrids. The protein is Ribonuclease H of Shewanella sp. (strain ANA-3).